A 122-amino-acid polypeptide reads, in one-letter code: Large ribosomal subunit protein uL14 (122 aa).

Belongs to the universal ribosomal protein uL14 family. In terms of assembly, part of the 50S ribosomal subunit. Forms a cluster with proteins L3 and L19. In the 70S ribosome, L14 and L19 interact and together make contacts with the 16S rRNA in bridges B5 and B8.

Binds to 23S rRNA. Forms part of two intersubunit bridges in the 70S ribosome. This Leuconostoc mesenteroides subsp. mesenteroides (strain ATCC 8293 / DSM 20343 / BCRC 11652 / CCM 1803 / JCM 6124 / NCDO 523 / NBRC 100496 / NCIMB 8023 / NCTC 12954 / NRRL B-1118 / 37Y) protein is Large ribosomal subunit protein uL14.